We begin with the raw amino-acid sequence, 100 residues long: DNA-binding protein HU (100 aa).

It belongs to the bacterial histone-like protein family.

In terms of biological role, histone-like DNA-binding protein which is capable of wrapping DNA to stabilize it, and thus to prevent its denaturation under extreme environmental conditions. In Synechocystis sp. (strain ATCC 27184 / PCC 6803 / Kazusa), this protein is DNA-binding protein HU (hup).